The sequence spans 293 residues: 4-hydroxybenzoate octaprenyltransferase (293 aa).

The next 8 membrane-spanning stretches (helical) occupy residues 41 to 61, 98 to 118, 122 to 142, 145 to 165, 167 to 187, 218 to 238, 241 to 261, and 272 to 292; these read FAAA…LGVI, TEAK…DLLL, TFLL…MKRF, LPQV…YGAV, ESLP…TVAY, IIAL…WISQ, WGYF…CWLT, and AFLN…VGIY.

It belongs to the UbiA prenyltransferase family. It depends on Mg(2+) as a cofactor.

The protein localises to the cell inner membrane. It carries out the reaction all-trans-octaprenyl diphosphate + 4-hydroxybenzoate = 4-hydroxy-3-(all-trans-octaprenyl)benzoate + diphosphate. Its pathway is cofactor biosynthesis; ubiquinone biosynthesis. Its function is as follows. Catalyzes the prenylation of para-hydroxybenzoate (PHB) with an all-trans polyprenyl group. Mediates the second step in the final reaction sequence of ubiquinone-8 (UQ-8) biosynthesis, which is the condensation of the polyisoprenoid side chain with PHB, generating the first membrane-bound Q intermediate 3-octaprenyl-4-hydroxybenzoate. The chain is 4-hydroxybenzoate octaprenyltransferase from Actinobacillus pleuropneumoniae serotype 5b (strain L20).